A 132-amino-acid polypeptide reads, in one-letter code: MAILISPSNNTGWGLGTHKLFGGAKQKSDQHPVYVQAHYRAPWGSKGRRRPGRARGVPLDPKTEAEVVATIDEVARNGPPAARLVLEAARRVGAYNLRRARKLTPAGRAMAAMRARQMVNQAKRRKRRVRSK.

Residues 2-23 (AILISPSNNTGWGLGTHKLFGG) constitute a propeptide that is removed on maturation. A Nuclear localization signal motif is present at residues 124 to 132 (RRKRRVRSK).

Belongs to the adenoviridae histone-like nucleoprotein family. As to quaternary structure, interacts with the core-capsid bridging protein; this interaction bridges the virus core to the capsid. Interacts with host NPM1; this interaction might play a role in placing the pre-histone-like nucleoprotein on the viral DNA or regulating viral gene expression. Interacts with host HMGB1; this interaction inhibits host immune response. Cleaved near the N-terminus by the viral protease during virion maturation to form the mature protein.

Its subcellular location is the virion. The protein resides in the host nucleus. It is found in the host nucleolus. In terms of biological role, plays a role in the inhibition of host immune response within the nucleus. Interacts with cellular nucleosomes and immobilizes the host immune danger signal HMGB1 on chromatin. In turn, prevents HMGB1 release out of the cell and thus decreases inflammation. Also plays a role in the wrapping and condensation of the viral DNA. May also promote viral genome import into the nucleus. This is Pre-histone-like nucleoprotein from Canine adenovirus serotype 1 (strain RI261) (CAdV-1).